A 239-amino-acid polypeptide reads, in one-letter code: DUP240 protein DFP3 (239 aa).

Residues 1–54 (MQPHLDNNSNNDDVKLDTLGEQNVLSSAENITLPEDTFKSYMTYLLYEMAHYKP) lie on the Cytoplasmic side of the membrane. A helical membrane pass occupies residues 55 to 75 (MIFSFLALSVSILIVVIFHNV). Topologically, residues 76 to 79 (KACD) are extracellular. A helical transmembrane segment spans residues 80–104 (VVFGFSIFVTSILFLSTLIPFNVYI). Residues 105-239 (SDEGFRIKLL…RKQYPDADIP (135 aa)) lie on the Cytoplasmic side of the membrane.

The protein belongs to the DUP/COS family. In terms of assembly, interacts according to large scale protein interaction studies with MEC3 and ULP1.

Its subcellular location is the membrane. This is DUP240 protein DFP3 from Saccharomyces cerevisiae (strain ATCC 204508 / S288c) (Baker's yeast).